We begin with the raw amino-acid sequence, 324 residues long: Geranylgeranyl diphosphate synthase (324 aa).

K46, R49, and H78 together coordinate isopentenyl diphosphate. D85 and D89 together coordinate Mg(2+). R94 lines the an all-trans-polyprenyl diphosphate pocket. R95 provides a ligand contact to isopentenyl diphosphate. 5 residues coordinate an all-trans-polyprenyl diphosphate: K176, T177, Q214, K231, and K241.

The protein belongs to the FPP/GGPP synthase family. It depends on Mg(2+) as a cofactor.

The enzyme catalyses isopentenyl diphosphate + (2E,6E)-farnesyl diphosphate = (2E,6E,10E)-geranylgeranyl diphosphate + diphosphate. Its pathway is isoprenoid biosynthesis; geranylgeranyl diphosphate biosynthesis; geranylgeranyl diphosphate from farnesyl diphosphate and isopentenyl diphosphate: step 1/1. Its function is as follows. Catalyzes the sequential condensation of isopentenyl pyrophosphate with the allylic pyrophosphates to yield geranylgeranyl diphosphate (GGPP) which is a precursor of the ether-linked lipids. The protein is Geranylgeranyl diphosphate synthase of Methanosarcina mazei (strain ATCC BAA-159 / DSM 3647 / Goe1 / Go1 / JCM 11833 / OCM 88) (Methanosarcina frisia).